The following is a 239-amino-acid chain: Probable transcriptional regulatory protein Sca_0317 (239 aa).

The protein belongs to the TACO1 family. YeeN subfamily.

The protein resides in the cytoplasm. In Staphylococcus carnosus (strain TM300), this protein is Probable transcriptional regulatory protein Sca_0317.